A 399-amino-acid polypeptide reads, in one-letter code: 26S proteasome regulatory subunit 10B homolog A (399 aa).

An N-acetylthreonine modification is found at Thr-2. 180 to 187 (GPPGTGKT) serves as a coordination point for ATP. A Glycyl lysine isopeptide (Lys-Gly) (interchain with G-Cter in ubiquitin) cross-link involves residue Lys-203.

The protein belongs to the AAA ATPase family. Component of the 19S regulatory particle (RP/PA700) base subcomplex of the 26S proteasome. The 26S proteasome is composed of a core protease (CP), known as the 20S proteasome, capped at one or both ends by the 19S regulatory particle (RP/PA700). The RP/PA700 complex is composed of at least 17 different subunits in two subcomplexes, the base and the lid, which form the portions proximal and distal to the 20S proteolytic core, respectively.

Its subcellular location is the cytoplasm. It is found in the nucleus. Its function is as follows. The 26S proteasome is involved in the ATP-dependent degradation of ubiquitinated proteins. The regulatory (or ATPase) complex confers ATP dependency and substrate specificity to the 26S complex. The chain is 26S proteasome regulatory subunit 10B homolog A (RPT4A) from Arabidopsis thaliana (Mouse-ear cress).